The primary structure comprises 451 residues: Clusterin (451 aa).

Residues 1–18 (MELPLLALLSLGLVCQGG) form the signal peptide. Disulfide bonds link C98–C314, C109–C306, C112–C303, C117–C296, and C125–C286. 6 N-linked (GlcNAc...) asparagine glycosylation sites follow: N99, N141, N278, N355, N375, and N447.

This sequence belongs to the clusterin family. In terms of assembly, antiparallel disulfide-linked heterodimer of an alpha chain and a beta chain. Self-associates and forms higher oligomers. Interacts with a broad range of misfolded proteins. Proteolytically cleaved on its way through the secretory system, probably within the Golgi lumen. Post-translationally, polyubiquitinated, leading to proteasomal degradation.

It localises to the secreted. The protein resides in the cytoplasmic vesicle. The protein localises to the secretory vesicle. It is found in the chromaffin granule. Its subcellular location is the nucleus. It localises to the cytoplasm. The protein resides in the mitochondrion membrane. The protein localises to the cytosol. It is found in the endoplasmic reticulum. Its function is as follows. Functions as extracellular chaperone that prevents aggregation of nonnative proteins. Prevents stress-induced aggregation of blood plasma proteins. Does not require ATP. Maintains partially unfolded proteins in a state appropriate for subsequent refolding by other chaperones, such as HSPA8/HSC70. Does not refold proteins by itself. Binding to cell surface receptors triggers internalization of the chaperone-client complex and subsequent lysosomal or proteasomal degradation. When secreted, protects cells against apoptosis and against cytolysis by complement: inhibits assembly of the complement membrane attack complex (MAC) by preventing polymerization of C9 pore component of the MAC complex. Intracellular forms interact with ubiquitin and SCF (SKP1-CUL1-F-box protein) E3 ubiquitin-protein ligase complexes and promote the ubiquitination and subsequent proteasomal degradation of target proteins. Modulates NF-kappa-B transcriptional activity. Promotes apoptosis when in the nucleus. Inhibits apoptosis when associated with the mitochondrial membrane by interference with BAX-dependent release of cytochrome c into the cytoplasm. Plays a role in the regulation of cell proliferation. This is Clusterin (CLU) from Coturnix japonica (Japanese quail).